The chain runs to 309 residues: Olfactory receptor 1A2 (309 aa).

The Extracellular portion of the chain corresponds to 1–25 (MKKENQSFNLDFILLGVTSQQEQNN). N-linked (GlcNAc...) asparagine glycosylation is present at Asn5. The helical transmembrane segment at 26 to 49 (VFFVIFLCIYPITLTGNLLIILAI) threads the bilayer. Topologically, residues 50 to 57 (CADIRLHN) are cytoplasmic. Residues 58-79 (PMYFLLANLSLVDIIFSSVTIP) traverse the membrane as a helical segment. Residues 80-100 (KVLANHLLGSKFISFGGCLMQ) lie on the Extracellular side of the membrane. Cys97 and Cys189 are joined by a disulfide. Residues 101–120 (MYFMIALAKADSYTLAAMAY) traverse the membrane as a helical segment. The Cytoplasmic portion of the chain corresponds to 121 to 139 (DRAVAISCPLHYTTIMSPR). Residues 140–158 (SCILLIAGSWVIGNTSALP) traverse the membrane as a helical segment. Residues 159–195 (HTLLTASLSFCGNQEVANFYCDIMPLLKLSCSDVHFN) lie on the Extracellular side of the membrane. Residues 196–218 (VKMMYLGVGVFSLPLLCIIVSYV) form a helical membrane-spanning segment. The Cytoplasmic portion of the chain corresponds to 219–235 (QVFSTVFQVPSTKSLFK). The helical transmembrane segment at 236–258 (AFCTCGSHLTVVFLYYGTTMGMY) threads the bilayer. The Extracellular portion of the chain corresponds to 259 to 270 (FRPLTSYSPKDA). A helical transmembrane segment spans residues 271–290 (VITVMYVAVTPALNPFIYSL). The Cytoplasmic segment spans residues 291–309 (RNWDMKAALQKLFSKRISS).

It belongs to the G-protein coupled receptor 1 family.

It localises to the cell membrane. In terms of biological role, odorant receptor. This chain is Olfactory receptor 1A2 (OR1A2), found in Homo sapiens (Human).